A 467-amino-acid chain; its full sequence is Asparagine--tRNA ligase (467 aa).

Belongs to the class-II aminoacyl-tRNA synthetase family. As to quaternary structure, homodimer.

The protein resides in the cytoplasm. It catalyses the reaction tRNA(Asn) + L-asparagine + ATP = L-asparaginyl-tRNA(Asn) + AMP + diphosphate + H(+). This Actinobacillus pleuropneumoniae serotype 5b (strain L20) protein is Asparagine--tRNA ligase.